The following is a 173-amino-acid chain: Crossover junction endodeoxyribonuclease RuvC (173 aa).

Residues aspartate 8, glutamate 67, and aspartate 139 contribute to the active site. Mg(2+) is bound by residues aspartate 8, glutamate 67, and aspartate 139.

It belongs to the RuvC family. As to quaternary structure, homodimer which binds Holliday junction (HJ) DNA. The HJ becomes 2-fold symmetrical on binding to RuvC with unstacked arms; it has a different conformation from HJ DNA in complex with RuvA. In the full resolvosome a probable DNA-RuvA(4)-RuvB(12)-RuvC(2) complex forms which resolves the HJ. Mg(2+) is required as a cofactor.

The protein localises to the cytoplasm. It catalyses the reaction Endonucleolytic cleavage at a junction such as a reciprocal single-stranded crossover between two homologous DNA duplexes (Holliday junction).. Functionally, the RuvA-RuvB-RuvC complex processes Holliday junction (HJ) DNA during genetic recombination and DNA repair. Endonuclease that resolves HJ intermediates. Cleaves cruciform DNA by making single-stranded nicks across the HJ at symmetrical positions within the homologous arms, yielding a 5'-phosphate and a 3'-hydroxyl group; requires a central core of homology in the junction. The consensus cleavage sequence is 5'-(A/T)TT(C/G)-3'. Cleavage occurs on the 3'-side of the TT dinucleotide at the point of strand exchange. HJ branch migration catalyzed by RuvA-RuvB allows RuvC to scan DNA until it finds its consensus sequence, where it cleaves and resolves the cruciform DNA. The protein is Crossover junction endodeoxyribonuclease RuvC of Shewanella pealeana (strain ATCC 700345 / ANG-SQ1).